Reading from the N-terminus, the 103-residue chain is N(4)-acetylcytidine amidohydrolase (103 aa).

Residues I6–K101 enclose the ASCH domain. The Proton acceptor role is filled by K21. T24 serves as the catalytic Nucleophile. The active-site Proton donor is the E74.

It belongs to the N(4)-acetylcytidine amidohydrolase family.

The catalysed reaction is N(4)-acetylcytidine + H2O = cytidine + acetate + H(+). It carries out the reaction N(4)-acetyl-2'-deoxycytidine + H2O = 2'-deoxycytidine + acetate + H(+). The enzyme catalyses N(4)-acetylcytosine + H2O = cytosine + acetate + H(+). Catalyzes the hydrolysis of N(4)-acetylcytidine (ac4C). The sequence is that of N(4)-acetylcytidine amidohydrolase (yqfB) from Escherichia coli O8 (strain IAI1).